The sequence spans 282 residues: 2-dehydro-3-deoxyphosphooctonate aldolase (282 aa).

Belongs to the KdsA family.

It localises to the cytoplasm. The catalysed reaction is D-arabinose 5-phosphate + phosphoenolpyruvate + H2O = 3-deoxy-alpha-D-manno-2-octulosonate-8-phosphate + phosphate. The protein operates within carbohydrate biosynthesis; 3-deoxy-D-manno-octulosonate biosynthesis; 3-deoxy-D-manno-octulosonate from D-ribulose 5-phosphate: step 2/3. Its pathway is bacterial outer membrane biogenesis; lipopolysaccharide biosynthesis. The protein is 2-dehydro-3-deoxyphosphooctonate aldolase of Bradyrhizobium diazoefficiens (strain JCM 10833 / BCRC 13528 / IAM 13628 / NBRC 14792 / USDA 110).